A 445-amino-acid polypeptide reads, in one-letter code: Methionine aminopeptidase 2-1 (445 aa).

Positions 1 to 99 (MAAQVPTEAL…FPNKAYPKGE (99 aa)) are disordered. The segment covering 61–75 (KKKKKRKPKKKKKHP) has biased composition (basic residues). H198 lines the substrate pocket. 3 residues coordinate a divalent metal cation: D218, D229, and H298. H306 serves as a coordination point for substrate. E331 and E426 together coordinate a divalent metal cation.

The protein belongs to the peptidase M24A family. Methionine aminopeptidase eukaryotic type 2 subfamily. Co(2+) serves as cofactor. Requires Zn(2+) as cofactor. It depends on Mn(2+) as a cofactor. Fe(2+) is required as a cofactor.

Its subcellular location is the cytoplasm. It carries out the reaction Release of N-terminal amino acids, preferentially methionine, from peptides and arylamides.. In terms of biological role, cotranslationally removes the N-terminal methionine from nascent proteins. The N-terminal methionine is often cleaved when the second residue in the primary sequence is small and uncharged (Met-Ala-, Cys, Gly, Pro, Ser, Thr, or Val). The polypeptide is Methionine aminopeptidase 2-1 (Fusarium vanettenii (strain ATCC MYA-4622 / CBS 123669 / FGSC 9596 / NRRL 45880 / 77-13-4) (Fusarium solani subsp. pisi)).